A 427-amino-acid polypeptide reads, in one-letter code: 4-hydroxy-3-methylbut-2-en-1-yl diphosphate synthase (flavodoxin) (427 aa).

The disordered stretch occupies residues 1–21 (MNKLENTIDSDIAGPAPRHRT). Positions 310, 313, 356, and 363 each coordinate [4Fe-4S] cluster.

It belongs to the IspG family. [4Fe-4S] cluster is required as a cofactor.

It carries out the reaction (2E)-4-hydroxy-3-methylbut-2-enyl diphosphate + oxidized [flavodoxin] + H2O + 2 H(+) = 2-C-methyl-D-erythritol 2,4-cyclic diphosphate + reduced [flavodoxin]. Its pathway is isoprenoid biosynthesis; isopentenyl diphosphate biosynthesis via DXP pathway; isopentenyl diphosphate from 1-deoxy-D-xylulose 5-phosphate: step 5/6. Functionally, converts 2C-methyl-D-erythritol 2,4-cyclodiphosphate (ME-2,4cPP) into 1-hydroxy-2-methyl-2-(E)-butenyl 4-diphosphate. The protein is 4-hydroxy-3-methylbut-2-en-1-yl diphosphate synthase (flavodoxin) of Bradyrhizobium diazoefficiens (strain JCM 10833 / BCRC 13528 / IAM 13628 / NBRC 14792 / USDA 110).